A 727-amino-acid chain; its full sequence is 5'-AMP-activated serine/threonine-protein kinase catalytic subunit alpha (727 aa).

Residues 31-284 (YRLDKTLGIG…IHEIRNHPWF (254 aa)) enclose the Protein kinase domain. ATP is bound by residues 37 to 45 (LGIGSFGKV) and Lys-60. Asp-154 acts as the Proton acceptor in catalysis. Thr-188 bears the Phosphothreonine mark. The interval 382–590 (FTTTTGFNPS…GSNNNSYEGG (209 aa)) is disordered. Composition is skewed to low complexity over residues 391-483 (SNSN…SSIS) and 494-586 (NLNN…NNNS). The 49-residue stretch at 679–727 (RMVNGKPIKLVLQLFRVAENRYLLDIKKIEGEIFIFFDICSLMLEELNL) folds into the KA1 domain.

The protein belongs to the protein kinase superfamily. CAMK Ser/Thr protein kinase family. SNF1 subfamily. In terms of assembly, heterotrimer of an alpha catalytic subunit, a beta and a gamma non-catalytic subunits.

The catalysed reaction is L-seryl-[protein] + ATP = O-phospho-L-seryl-[protein] + ADP + H(+). It carries out the reaction L-threonyl-[protein] + ATP = O-phospho-L-threonyl-[protein] + ADP + H(+). Activated enzyme phosphorylates target proteins and initiates downstream signaling pathways that shift metabolism from anabolic to catabolic pathways. Acts as a highly sensitive cellular energy sensor. The protein is 5'-AMP-activated serine/threonine-protein kinase catalytic subunit alpha (snfA) of Dictyostelium discoideum (Social amoeba).